A 299-amino-acid polypeptide reads, in one-letter code: Protease HtpX homolog (299 aa).

A run of 2 helical transmembrane segments spans residues 19 to 39 (LFIVLFSLILFAVGYFFVWYF) and 41 to 61 (WGITGIIFLAIFIVLYNWIAY). Histidine 146 provides a ligand contact to Zn(2+). The active site involves glutamate 147. A Zn(2+)-binding site is contributed by histidine 150. 2 helical membrane-spanning segments follow: residues 156 to 176 (ILLMTVVAIVAGLIILLRDVF) and 198 to 218 (IILLLIGLILSIIAPIVVLII). Glutamate 227 provides a ligand contact to Zn(2+).

The protein belongs to the peptidase M48B family. It depends on Zn(2+) as a cofactor.

The protein resides in the cell membrane. The chain is Protease HtpX homolog from Caldanaerobacter subterraneus subsp. tengcongensis (strain DSM 15242 / JCM 11007 / NBRC 100824 / MB4) (Thermoanaerobacter tengcongensis).